The sequence spans 197 residues: Holliday junction branch migration complex subunit RuvA (197 aa).

The tract at residues 1–63 (MYAYLKGIIT…EDAHLLYGFR (63 aa)) is domain I. The domain II stretch occupies residues 64–142 (SEDEKKLFLS…VAGDDLPAKV (79 aa)). The tract at residues 143 to 147 (AVQAS) is flexible linker. Residues 148–197 (AENQELEEAMEAMLALGYKATELKKIKKFFEGTTDTAENYIKSALKMLVK) form a domain III region.

The protein belongs to the RuvA family. In terms of assembly, homotetramer. Forms an RuvA(8)-RuvB(12)-Holliday junction (HJ) complex. HJ DNA is sandwiched between 2 RuvA tetramers; dsDNA enters through RuvA and exits via RuvB. An RuvB hexamer assembles on each DNA strand where it exits the tetramer. Each RuvB hexamer is contacted by two RuvA subunits (via domain III) on 2 adjacent RuvB subunits; this complex drives branch migration. In the full resolvosome a probable DNA-RuvA(4)-RuvB(12)-RuvC(2) complex forms which resolves the HJ.

It localises to the cytoplasm. Its function is as follows. The RuvA-RuvB-RuvC complex processes Holliday junction (HJ) DNA during genetic recombination and DNA repair, while the RuvA-RuvB complex plays an important role in the rescue of blocked DNA replication forks via replication fork reversal (RFR). RuvA specifically binds to HJ cruciform DNA, conferring on it an open structure. The RuvB hexamer acts as an ATP-dependent pump, pulling dsDNA into and through the RuvAB complex. HJ branch migration allows RuvC to scan DNA until it finds its consensus sequence, where it cleaves and resolves the cruciform DNA. This Streptococcus pneumoniae (strain Hungary19A-6) protein is Holliday junction branch migration complex subunit RuvA.